Reading from the N-terminus, the 752-residue chain is MGFTLLIDNYDSFTWNIYADLASVGGNPYVVRNDKITLKEIEGMFSDGELERIVISPGPGHPRTDSGVSRDVIAWGMGKLPILGVCMGLECIVDLLGGEIAYAGEIKHGKTSLVQHDSIGVFHNLPQFLSSTRYHSLSAQIQSLPSVLQVTSTTKESGVIMGVRHRTYTVEAVQYHPESCMSEGGRGLMANFIQMKGGKWGGENAWCGVPAEGEEEQPKAKTNGAPSLPTILNRIHAQRLLDVEQAEKVPATSPANVSTSLSLYASPPLINFRDRMVSTPHTAVMAEIKRASPSKGDIAPTASAPEQALKYALAGASVISVLTEPTWFKGSLLDMLAVRNAVDSLPNRPAILRKDFVLSKYMIDEARLYGADTVLLIVAMLEPQQLKELYDYSVSLGMEPLVEVNNPTELSLALEIGSKVIGVNNRNLHDFNVDMSTTSRVNAALNGRDVVLCALSGISSHEDVEKYVKEGVKGVLVGEALMRASDTKAFLRSLIGLPPLEVVPKSRPLVKICGIRSTDDAKLAISAGADLLGVILVPGTKRCISTSTAREISALVQSARSQSSSKPLEPSLSSPWFTTQSDLLSSRRKPLLVGVFQNQSLSDILSAVEEIGLNLVQLHGDEPQAWAKFIPVPVVKVFRVSPEGIVRGGEIRRPGLNQAILLDAGGVSGGGGEGKAFPWEHAKRLIQSGEVGSEGHMPLPVILAGGLTPENVGQAIEQAGEGVWCVDVSSGVEGEGGKVKEKVEAFVKAVRG.

Positions 3–202 constitute a Glutamine amidotransferase type-1 domain; the sequence is FTLLIDNYDS…IQMKGGKWGG (200 aa). 58-60 contacts L-glutamine; that stretch reads GPG. The active-site Nucleophile; for GATase activity is the Cys86. 136 to 137 is an L-glutamine binding site; it reads SL. Catalysis depends on for GATase activity residues His176 and Glu178. The interval 231–495 is indole-3-glycerol phosphate synthase; sequence ILNRIHAQRL…DTKAFLRSLI (265 aa). The segment at 509 to 752 is N-(5'-phosphoribosyl)anthranilate isomerase; sequence LVKICGIRST…VEAFVKAVRG (244 aa).

It carries out the reaction N-(5-phospho-beta-D-ribosyl)anthranilate = 1-(2-carboxyphenylamino)-1-deoxy-D-ribulose 5-phosphate. The enzyme catalyses 1-(2-carboxyphenylamino)-1-deoxy-D-ribulose 5-phosphate + H(+) = (1S,2R)-1-C-(indol-3-yl)glycerol 3-phosphate + CO2 + H2O. It catalyses the reaction chorismate + L-glutamine = anthranilate + pyruvate + L-glutamate + H(+). The protein operates within amino-acid biosynthesis; L-tryptophan biosynthesis; L-tryptophan from chorismate: step 1/5. It functions in the pathway amino-acid biosynthesis; L-tryptophan biosynthesis; L-tryptophan from chorismate: step 3/5. Its pathway is amino-acid biosynthesis; L-tryptophan biosynthesis; L-tryptophan from chorismate: step 4/5. Its function is as follows. Trifunctional enzyme bearing the Gln amidotransferase (GATase) domain of anthranilate synthase, indole-glycerolphosphate synthase, and phosphoribosylanthranilate isomerase activities. The polypeptide is Multifunctional tryptophan biosynthesis protein (TRP1) (Cryptococcus neoformans var. neoformans serotype D (strain B-3501A) (Filobasidiella neoformans)).